The sequence spans 605 residues: DNA mismatch repair protein MutL (605 aa).

Belongs to the DNA mismatch repair MutL/HexB family.

This protein is involved in the repair of mismatches in DNA. It is required for dam-dependent methyl-directed DNA mismatch repair. May act as a 'molecular matchmaker', a protein that promotes the formation of a stable complex between two or more DNA-binding proteins in an ATP-dependent manner without itself being part of a final effector complex. The chain is DNA mismatch repair protein MutL from Exiguobacterium sp. (strain ATCC BAA-1283 / AT1b).